Consider the following 147-residue polypeptide: Prefoldin subunit alpha (147 aa).

The protein belongs to the prefoldin alpha subunit family. In terms of assembly, heterohexamer of two alpha and four beta subunits.

The protein resides in the cytoplasm. Functionally, molecular chaperone capable of stabilizing a range of proteins. Seems to fulfill an ATP-independent, HSP70-like function in archaeal de novo protein folding. This chain is Prefoldin subunit alpha, found in Saccharolobus islandicus (strain Y.N.15.51 / Yellowstone #2) (Sulfolobus islandicus).